Consider the following 210-residue polypeptide: Large ribosomal subunit protein uL3 (210 aa).

The disordered stretch occupies residues 119 to 143 (GYQGNIKKDGQSRGPMAHGSRYHRR).

The protein belongs to the universal ribosomal protein uL3 family. In terms of assembly, part of the 50S ribosomal subunit. Forms a cluster with proteins L14 and L19.

One of the primary rRNA binding proteins, it binds directly near the 3'-end of the 23S rRNA, where it nucleates assembly of the 50S subunit. In Lacticaseibacillus casei (strain BL23) (Lactobacillus casei), this protein is Large ribosomal subunit protein uL3.